The following is a 160-amino-acid chain: Transcriptional repressor NrdR (160 aa).

A compositionally biased stretch (polar residues) spans 1-11 (MRCPNCNSLDT). A disordered region spans residues 1-20 (MRCPNCNSLDTQVKDSRPTE). A zinc finger lies at 3 to 34 (CPNCNSLDTQVKDSRPTEDSSVIRRRRVCIAC). The ATP-cone domain maps to 49-139 (LIVIKRNGRR…VYRNFREAKD (91 aa)).

Belongs to the NrdR family. Zn(2+) is required as a cofactor.

Its function is as follows. Negatively regulates transcription of bacterial ribonucleotide reductase nrd genes and operons by binding to NrdR-boxes. The sequence is that of Transcriptional repressor NrdR from Rhodopseudomonas palustris (strain ATCC BAA-98 / CGA009).